Reading from the N-terminus, the 109-residue chain is MSNSAPARQYLNEKVTPVLLEGMKILARDRPENPLQFLGQFLLDANANQQKQKEIVNQPEPQQETPKADADMSTPTMAEQVQTSFSNPASTPLTQTSSPSSNPGKNSAS.

The disordered stretch occupies residues 49–109; it reads QQKQKEIVNQ…SSNPGKNSAS (61 aa). Residues 73 to 87 are compositionally biased toward polar residues; sequence STPTMAEQVQTSFSN. Over residues 88–101 the composition is skewed to low complexity; the sequence is PASTPLTQTSSPSS.

Belongs to the dpy-30 family. In terms of assembly, component of the COMPASS (Set1C) complex composed of ash2, sdc1, set1, shg1, spp1, swd1, swd2 and swd3. Component of the Lid2 complex composed of ash2, jmj3, lid2, sdc1 and snt2.

It localises to the nucleus. The COMPASS (Set1C) complex specifically mono-, di- and trimethylates histone H3 to form H3K4me1/2/3, which subsequently activates gene expression by regulating transcription elongation and plays a role in telomere length maintenance. The sequence is that of Set1 complex component sdc1 (sdc1) from Schizosaccharomyces pombe (strain 972 / ATCC 24843) (Fission yeast).